The sequence spans 649 residues: Arylsulfatase (649 aa).

The N-terminal stretch at 1 to 22 (MLQRLVVALCLLGFAALTAAAA) is a signal peptide. 2 residues coordinate Ca(2+): D34 and D35. Residue N41 is glycosylated (N-linked (GlcNAc...) asparagine). C72 serves as a coordination point for Ca(2+). C72 functions as the Nucleophile in the catalytic mechanism. C72 bears the 3-oxoalanine (Cys) mark. Residues N89, N224, and N279 are each glycosylated (N-linked (GlcNAc...) asparagine). The Ca(2+) site is built by D324 and N325. N-linked (GlcNAc...) asparagine glycans are attached at residues N445, N489, and N531.

It belongs to the sulfatase family. The cofactor is Ca(2+). The conversion to 3-oxoalanine (also known as C-formylglycine, FGly), of a serine or cysteine residue in prokaryotes and of a cysteine residue in eukaryotes, is critical for catalytic activity.

The protein localises to the periplasm. The enzyme catalyses an aryl sulfate + H2O = a phenol + sulfate + H(+). With respect to regulation, inhibited by Na(3)BO(3) and KCN. No inhibition by sodium dodecyl sulfate, even at high concentration. In terms of biological role, is commonly produced by soil microorganisms and plays an important role in the mineralization of sulfates. In Volvox carteri (Green alga), this protein is Arylsulfatase.